Here is a 599-residue protein sequence, read N- to C-terminus: Beta-(1--&gt;2)glucan export ATP-binding/permease protein NdvA (599 aa).

The ABC transmembrane type-1 domain maps to 21 to 301 (TITMCVASVL…ISAFINQTVT (281 aa)). Transmembrane regions (helical) follow at residues 22–42 (ITMC…PVLF), 55–75 (IFSP…AAVF), 156–176 (MRMS…GQLV), 248–268 (MAST…VTKG), and 276–296 (IAFI…SAFI). The region spanning 335-569 (IVFDNVTYEF…GGRFSDLLRA (235 aa)) is the ABC transporter domain. 368-375 (GPTGAGKT) lines the ATP pocket.

The protein belongs to the ABC transporter superfamily. Beta-(1--&gt;2)glucan exporter (TC 3.A.1.108.1) family. Homodimer.

Its subcellular location is the cell inner membrane. It catalyses the reaction [(1-&gt;2)-beta-D-glucosyl](n)(in) + ATP + H2O = [(1-&gt;2)-beta-D-glucosyl](n)(out) + ADP + phosphate + H(+). Functionally, involved in beta-(1--&gt;2)glucan export. Its export to the periplasmic space is required to exert its action as a virulence factor. Transmembrane domains (TMD) form a pore in the inner membrane and the ATP-binding domain (NBD) is responsible for energy generation. The polypeptide is Beta-(1--&gt;2)glucan export ATP-binding/permease protein NdvA (Brucella abortus (strain 2308)).